The sequence spans 86 residues: MSLPLNPKPFLNGLTGKPVMVKLKWGMEYKGYLVSVDGYMNMQLANTEEYIDGALSGHLGEVLIRCNNVLYIRGVEEEEEDGEMRE.

At S2 the chain carries N-acetylserine. Positions N6–E78 constitute a Sm domain.

The protein belongs to the snRNP Sm proteins family. SmF/LSm6 subfamily. In terms of assembly, core component of the spliceosomal U1, U2, U4 and U5 small nuclear ribonucleoproteins (snRNPs), the building blocks of the spliceosome. Most spliceosomal snRNPs contain a common set of Sm proteins, SNRPB, SNRPD1, SNRPD2, SNRPD3, SNRPE, SNRPF and SNRPG that assemble in a heptameric protein ring on the Sm site of the small nuclear RNA to form the core snRNP. Component of the U1 snRNP. The U1 snRNP is composed of the U1 snRNA and the 7 core Sm proteins SNRPB, SNRPD1, SNRPD2, SNRPD3, SNRPE, SNRPF and SNRPG, and at least three U1 snRNP-specific proteins SNRNP70/U1-70K, SNRPA/U1-A and SNRPC/U1-C. Component of the U4/U6-U5 tri-snRNP complex composed of the U4, U6 and U5 snRNAs and at least PRPF3, PRPF4, PRPF6, PRPF8, PRPF31, SNRNP200, TXNL4A, SNRNP40, SNRPB, SNRPD1, SNRPD2, SNRPD3, SNRPE, SNRPF, SNRPG, DDX23, CD2BP2, PPIH, SNU13, EFTUD2, SART1 and USP39, plus LSM2, LSM3, LSM4, LSM5, LSM6, LSM7 and LSM8. Component of the U7 snRNP complex, or U7 Sm protein core complex, that is composed of the U7 snRNA and at least LSM10, LSM11, SNRPB, SNRPD3, SNRPE, SNRPF and SNRPG; the complex does not contain SNRPD1 and SNRPD2. Component of the minor spliceosome, which splices U12-type introns. Part of the SMN-Sm complex that contains SMN1, GEMIN2/SIP1, DDX20/GEMIN3, GEMIN4, GEMIN5, GEMIN6, GEMIN7, GEMIN8, STRAP/UNRIP and the Sm proteins SNRPB, SNRPD1, SNRPD2, SNRPD3, SNRPE, SNRPF and SNRPG; catalyzes core snRNPs assembly. Forms a 6S pICln-Sm complex composed of CLNS1A/pICln, SNRPD1, SNRPD2, SNRPE, SNRPF and SNRPG; ring-like structure where CLNS1A/pICln mimics additional Sm proteins and which is unable to assemble into the core snRNP. Interacts with GEMIN2 (via N-terminus); the interaction is direct. Interacts with SNRPD2; the interaction is direct. Interacts with SNRPE; the interaction is direct.

The protein resides in the cytoplasm. The protein localises to the cytosol. It localises to the nucleus. Its function is as follows. Plays a role in pre-mRNA splicing as a core component of the spliceosomal U1, U2, U4 and U5 small nuclear ribonucleoproteins (snRNPs), the building blocks of the spliceosome. Component of both the pre-catalytic spliceosome B complex and activated spliceosome C complexes. As a component of the minor spliceosome, involved in the splicing of U12-type introns in pre-mRNAs. As part of the U7 snRNP it is involved in histone 3'-end processing. The protein is Small nuclear ribonucleoprotein F (SNRPF) of Homo sapiens (Human).